We begin with the raw amino-acid sequence, 287 residues long: Isopentenyl-diphosphate Delta-isomerase 1, chloroplastic (287 aa).

The transit peptide at 1–51 (MTLLLNTTAKLYIAPRTLPFTSSSTFARSPFLRIPSLLKPLSPLTARVSLS) directs the protein to the chloroplast. K90 contributes to the substrate binding site. Residues H94 and H106 each contribute to the Mg(2+) site. Residues 104 to 256 (LLHRAFSVFL…GLKLSPWFRL (153 aa)) enclose the Nudix hydrolase domain. Substrate is bound by residues R125 and K129. C141 is an active-site residue. S142 is a binding site for substrate. Residues 142 to 172 (SHPLYRESELIDEESLGARNAAQRKLLDELG) carry the Nudix box motif. Mg(2+) contacts are provided by E201 and E203. E203 is an active-site residue.

Belongs to the IPP isomerase type 1 family. In terms of assembly, monomer. Requires Mg(2+) as cofactor. In terms of tissue distribution, mainly expressed in roots and trichomes and, to a lower extent, in leaves, flowers and stems.

It is found in the plastid. Its subcellular location is the chloroplast. The catalysed reaction is isopentenyl diphosphate = dimethylallyl diphosphate. The protein operates within isoprenoid biosynthesis; dimethylallyl diphosphate biosynthesis; dimethylallyl diphosphate from isopentenyl diphosphate: step 1/1. It functions in the pathway porphyrin-containing compound metabolism; chlorophyll biosynthesis. Its function is as follows. Catalyzes the 1,3-allylic rearrangement of the homoallylic substrate isopentenyl (IPP) to its highly electrophilic allylic isomer, dimethylallyl diphosphate (DMAPP). This Cannabis sativa (Hemp) protein is Isopentenyl-diphosphate Delta-isomerase 1, chloroplastic.